We begin with the raw amino-acid sequence, 447 residues long: ATP-dependent protease ATPase subunit HslU (447 aa).

Residues Ile-18, 60-65 (GVGKTE), Asp-259, Glu-325, and Arg-397 contribute to the ATP site.

The protein belongs to the ClpX chaperone family. HslU subfamily. A double ring-shaped homohexamer of HslV is capped on each side by a ring-shaped HslU homohexamer. The assembly of the HslU/HslV complex is dependent on binding of ATP.

The protein localises to the cytoplasm. Functionally, ATPase subunit of a proteasome-like degradation complex; this subunit has chaperone activity. The binding of ATP and its subsequent hydrolysis by HslU are essential for unfolding of protein substrates subsequently hydrolyzed by HslV. HslU recognizes the N-terminal part of its protein substrates and unfolds these before they are guided to HslV for hydrolysis. The sequence is that of ATP-dependent protease ATPase subunit HslU from Burkholderia thailandensis (strain ATCC 700388 / DSM 13276 / CCUG 48851 / CIP 106301 / E264).